Consider the following 224-residue polypeptide: Agamous-like MADS-box protein AGL9 homolog (224 aa).

The MADS-box domain maps to 3 to 57; it reads RGRVELKRIEGKINRQVTFAKRRNGLLKKAYELSVLCDAEVALIIFSNRGKLYEF. Residues 89-179 form the K-box domain; that stretch reads EISSQQEYLK…KQRLMEGSQL (91 aa).

In terms of tissue distribution, flower specific.

It is found in the nucleus. Functionally, probable transcription factor active in inflorescence development and floral organogenesis. The protein is Agamous-like MADS-box protein AGL9 homolog (TDR5) of Solanum lycopersicum (Tomato).